Reading from the N-terminus, the 339-residue chain is Glycerol-3-phosphate dehydrogenase [NAD(P)+] (339 aa).

NADPH contacts are provided by S15, Y16, H36, and K110. Sn-glycerol 3-phosphate contacts are provided by K110, G139, and T141. An NADPH-binding site is contributed by A143. 5 residues coordinate sn-glycerol 3-phosphate: K195, D248, S258, R259, and N260. K195 acts as the Proton acceptor in catalysis. Position 259 (R259) interacts with NADPH. Residues V283 and E285 each coordinate NADPH.

This sequence belongs to the NAD-dependent glycerol-3-phosphate dehydrogenase family.

The protein localises to the cytoplasm. The enzyme catalyses sn-glycerol 3-phosphate + NAD(+) = dihydroxyacetone phosphate + NADH + H(+). It catalyses the reaction sn-glycerol 3-phosphate + NADP(+) = dihydroxyacetone phosphate + NADPH + H(+). The protein operates within membrane lipid metabolism; glycerophospholipid metabolism. In terms of biological role, catalyzes the reduction of the glycolytic intermediate dihydroxyacetone phosphate (DHAP) to sn-glycerol 3-phosphate (G3P), the key precursor for phospholipid synthesis. This Erwinia tasmaniensis (strain DSM 17950 / CFBP 7177 / CIP 109463 / NCPPB 4357 / Et1/99) protein is Glycerol-3-phosphate dehydrogenase [NAD(P)+].